The sequence spans 476 residues: Ribulose bisphosphate carboxylase large chain (476 aa).

2 residues coordinate substrate: asparagine 124 and threonine 174. The Proton acceptor role is filled by lysine 176. A substrate-binding site is contributed by lysine 178. Lysine 202, aspartate 204, and glutamate 205 together coordinate Mg(2+). Lysine 202 bears the N6-carboxylysine mark. Histidine 295 functions as the Proton acceptor in the catalytic mechanism. Residues arginine 296, histidine 328, and serine 380 each coordinate substrate.

It belongs to the RuBisCO large chain family. Type I subfamily. In terms of assembly, heterohexadecamer of 8 large chains and 8 small chains; disulfide-linked. The disulfide link is formed within the large subunit homodimers. Mg(2+) serves as cofactor. Post-translationally, the disulfide bond which can form in the large chain dimeric partners within the hexadecamer appears to be associated with oxidative stress and protein turnover.

The protein resides in the carboxysome. The enzyme catalyses 2 (2R)-3-phosphoglycerate + 2 H(+) = D-ribulose 1,5-bisphosphate + CO2 + H2O. It carries out the reaction D-ribulose 1,5-bisphosphate + O2 = 2-phosphoglycolate + (2R)-3-phosphoglycerate + 2 H(+). In terms of biological role, ruBisCO catalyzes two reactions: the carboxylation of D-ribulose 1,5-bisphosphate, the primary event in carbon dioxide fixation, as well as the oxidative fragmentation of the pentose substrate in the photorespiration process. Both reactions occur simultaneously and in competition at the same active site. This is Ribulose bisphosphate carboxylase large chain from Trichodesmium erythraeum (strain IMS101).